The chain runs to 20 residues: Alpha-amylase (20 aa).

It catalyses the reaction Endohydrolysis of (1-&gt;4)-alpha-D-glucosidic linkages in polysaccharides containing three or more (1-&gt;4)-alpha-linked D-glucose units.. With respect to regulation, strongly inhibited by Hg (2+). Inhibited by Zn (2+). Activated by Fe (2+), Mg (2+) and Ba (2+). Functionally, alpha-amylase active towards amylose, starch, amylopectin and maltodextrins. Has lower activity towards glycogen, and is not active towards alpha/beta-cyclodextrin. This is Alpha-amylase from Bacillus sp.